Here is a 232-residue protein sequence, read N- to C-terminus: Venom allergen 5 (232 aa).

Residues 1–23 (MEQIKYLLIGIIFSSAISSSLQC) form the signal peptide. 3 disulfides stabilise this stretch: Cys28-Cys43, Cys54-Cys119, and Cys198-Cys215. Residues 71–217 (LQLHNELRAK…FYTTMVACNY (147 aa)) enclose the SCP domain.

The protein belongs to the CRISP family. Venom allergen 5-like subfamily. In terms of tissue distribution, expressed by the venom gland.

The protein resides in the secreted. This chain is Venom allergen 5, found in Microctonus hyperodae (Parasitoid wasp).